Reading from the N-terminus, the 1404-residue chain is DNA-directed RNA polymerase subunit beta' (1404 aa).

Zn(2+)-binding residues include Cys-70, Cys-72, Cys-85, and Cys-88. Mg(2+)-binding residues include Asp-460, Asp-462, and Asp-464. Positions 814, 888, 895, and 898 each coordinate Zn(2+).

The protein belongs to the RNA polymerase beta' chain family. In terms of assembly, the RNAP catalytic core consists of 2 alpha, 1 beta, 1 beta' and 1 omega subunit. When a sigma factor is associated with the core the holoenzyme is formed, which can initiate transcription. Mg(2+) serves as cofactor. Zn(2+) is required as a cofactor.

It carries out the reaction RNA(n) + a ribonucleoside 5'-triphosphate = RNA(n+1) + diphosphate. In terms of biological role, DNA-dependent RNA polymerase catalyzes the transcription of DNA into RNA using the four ribonucleoside triphosphates as substrates. In Shewanella amazonensis (strain ATCC BAA-1098 / SB2B), this protein is DNA-directed RNA polymerase subunit beta'.